Reading from the N-terminus, the 94-residue chain is Acylphosphatase (94 aa).

Positions 7–94 (AALVRITGRV…EAPAGFRITR (88 aa)) constitute an Acylphosphatase-like domain. Active-site residues include Arg-22 and Asn-40.

This sequence belongs to the acylphosphatase family.

It carries out the reaction an acyl phosphate + H2O = a carboxylate + phosphate + H(+). The polypeptide is Acylphosphatase (acyP) (Sinorhizobium medicae (strain WSM419) (Ensifer medicae)).